We begin with the raw amino-acid sequence, 1453 residues long: NRPS-like tryptophan epimerase fscC (1453 aa).

The adenylation stretch occupies residues Ser-37–Val-433. A Carrier domain is found at Thr-544–Thr-626. Ser-586 is subject to O-(pantetheine 4'-phosphoryl)serine. Residues Phe-639–Phe-1053 are epimerization (E) domain. Residues Phe-1181–Gln-1391 are condensation.

The protein belongs to the NRP synthetase family. Pantetheine 4'-phosphate is required as a cofactor.

It functions in the pathway secondary metabolite biosynthesis. Functionally, NRPS-like tryptophan epimerase; part of the fragmented gene cluster that mediates the biosynthesis of fusarochromene, a tryptophan-derived metabolite closely related to a group of mycotoxins including fusarochromanone. Within the pathway, fscC catalyzes the first step via epimerization of L-tryptophan to provide the intermediate D-tryptophan. D-tryptophan is subsequently hydroxylated by the tryptophan 6-hydroxylase fscE to yield 6-hydroxytryptophan. The pyrrole ring undergoes cleavaged by the tryptophan 2,3-dioxygenase fscD and is finally converted to 4-hydroxykyrunenine by the hydrolase fscH. The NRPS-like oxidoreductase fscA reduces the carboxyl group to primary alcohol and the DMATS-type prenyltransferase fscG performs prenylation, followed by the formation of a chromene ring catalyzed by the oxidoreductase fscI, which leads to desacetylfusarochromene. Epoxidation by fscF and rearrangement reactions of chromene double bonds convert compound desacetylfusarochromene to fusarochromanones. Although specific acetyltransferases were not found near the fsc gene cluster, several predicted enzymes containing the N-acetyltransferase superfamily domain are present in the genome of F.equiseti. These predicted enzymes may have the potential to convert desacetylfusarochromene to fusarochromene. The protein is NRPS-like tryptophan epimerase fscC of Fusarium equiseti (Fusarium scirpi).